Consider the following 147-residue polypeptide: uncharacterized protein (147 aa).

This is an uncharacterized protein from Escherichia coli (strain K12).